We begin with the raw amino-acid sequence, 289 residues long: Thioredoxin-like protein 1 (289 aa).

Positions 2–109 constitute a Thioredoxin domain; it reads VGVKPVGSDP…EEKIKQHLEN (108 aa). Cysteine 34 and cysteine 37 are oxidised to a cystine. Residue serine 113 is modified to Phosphoserine. The 171-residue stretch at 115–285 folds into the PITH domain; that stretch reads EDTDIPKGYM…NDFKRVVGKK (171 aa).

As to quaternary structure, component of the 19S regulatory cap of the 26S proteasome. Interacts with PSMD14/RPN11. Interacts with, and reduces EEF1A1.

The protein localises to the cytoplasm. It is found in the nucleus. Its function is as follows. Active thioredoxin with a redox potential of about -250 mV. The chain is Thioredoxin-like protein 1 (Txnl1) from Rattus norvegicus (Rat).